The primary structure comprises 588 residues: Aspartate--tRNA(Asp/Asn) ligase (588 aa).

Glu-172 lines the L-aspartate pocket. Positions 196–199 (QLFK) are aspartate. Arg-218 contributes to the L-aspartate binding site. ATP is bound by residues 218–220 (RDE) and Gln-227. An L-aspartate-binding site is contributed by His-450. Glu-484 contacts ATP. Arg-491 contributes to the L-aspartate binding site. Residue 536 to 539 (GLDR) participates in ATP binding.

Belongs to the class-II aminoacyl-tRNA synthetase family. Type 1 subfamily. Homodimer.

It is found in the cytoplasm. It catalyses the reaction tRNA(Asx) + L-aspartate + ATP = L-aspartyl-tRNA(Asx) + AMP + diphosphate. Aspartyl-tRNA synthetase with relaxed tRNA specificity since it is able to aspartylate not only its cognate tRNA(Asp) but also tRNA(Asn). Reaction proceeds in two steps: L-aspartate is first activated by ATP to form Asp-AMP and then transferred to the acceptor end of tRNA(Asp/Asn). The protein is Aspartate--tRNA(Asp/Asn) ligase of Nitrosospira multiformis (strain ATCC 25196 / NCIMB 11849 / C 71).